Reading from the N-terminus, the 149-residue chain is 3-dehydroquinate dehydratase (149 aa).

The active-site Proton acceptor is Y25. Residues N76, H82, and D89 each coordinate substrate. H102 serves as the catalytic Proton donor. Substrate contacts are provided by residues 103-104 and R113; that span reads LS.

The protein belongs to the type-II 3-dehydroquinase family. As to quaternary structure, homododecamer.

It carries out the reaction 3-dehydroquinate = 3-dehydroshikimate + H2O. It functions in the pathway metabolic intermediate biosynthesis; chorismate biosynthesis; chorismate from D-erythrose 4-phosphate and phosphoenolpyruvate: step 3/7. Catalyzes a trans-dehydration via an enolate intermediate. This chain is 3-dehydroquinate dehydratase, found in Acaryochloris marina (strain MBIC 11017).